We begin with the raw amino-acid sequence, 261 residues long: MRIALGIEYDGSGYFGWQRQAEVDSVQGQLERALSIVANEPIGLFCAGRTDAGVHATGQVVHFDTNAIRNEGAWTLGVNANLPDNIAVRWVKEVDDSFHARFSATARRYRYVIYNHSFRPGILRHGVSHYHGNIDADKMHQAAQVLLGEQDFTSFRAVQCQSKTPFRNVHSVNVTRQGMYVIVDIAANAFLHHMVRNIVGSLLEIGLGNQPLTWMGDLLALKDRNQAAATAKPHGLYLVDVTYPEQYQLPKLALGPLFMLD.

Catalysis depends on Asp-51, which acts as the Nucleophile. Tyr-109 contributes to the substrate binding site.

Belongs to the tRNA pseudouridine synthase TruA family. Homodimer.

It catalyses the reaction uridine(38/39/40) in tRNA = pseudouridine(38/39/40) in tRNA. In terms of biological role, formation of pseudouridine at positions 38, 39 and 40 in the anticodon stem and loop of transfer RNAs. The protein is tRNA pseudouridine synthase A of Shewanella sp. (strain W3-18-1).